A 314-amino-acid polypeptide reads, in one-letter code: Mitochondrial RNA-splicing protein MRS3 (314 aa).

3 Solcar repeats span residues 31–118, 128–210, and 217–310; these read APLY…CKKN, HHPF…STKF, and YNPL…AKHF. The next 6 helical transmembrane spans lie at 33–52, 93–112, 130–149, 185–204, 219–238, and 285–298; these read LYHQ…SVMF, GVQS…FGTY, PFKT…ALMN, SYPT…FVIY, PLIH…AITT, and GWKP…PATA.

This sequence belongs to the mitochondrial carrier (TC 2.A.29) family.

It localises to the mitochondrion inner membrane. Its function is as follows. MRS3 suppresses a mitochondrial splice defect in the first intron of the COB gene. It may act as a carrier, exerting its suppressor activity via modulation of solute concentrations in the mitochondrion (possibly of cations). The chain is Mitochondrial RNA-splicing protein MRS3 (MRS3) from Saccharomyces cerevisiae (strain ATCC 204508 / S288c) (Baker's yeast).